Reading from the N-terminus, the 460-residue chain is Squalene synthase (460 aa).

Residues 425–445 (ISILFVFFIILVCLAVIFYVF) form a helical membrane-spanning segment.

Belongs to the phytoene/squalene synthase family. Interacts with pof14. Requires Mg(2+) as cofactor.

The protein localises to the endoplasmic reticulum membrane. It catalyses the reaction 2 (2E,6E)-farnesyl diphosphate + NADPH + H(+) = squalene + 2 diphosphate + NADP(+). The enzyme catalyses 2 (2E,6E)-farnesyl diphosphate + NADH + H(+) = squalene + 2 diphosphate + NAD(+). It functions in the pathway terpene metabolism; lanosterol biosynthesis; lanosterol from farnesyl diphosphate: step 1/3. It participates in steroid metabolism; ergosterol biosynthesis. In terms of biological role, squalene synthase; part of the third module of ergosterol biosynthesis pathway that includes by the late steps of the pathway. Erg9 produces squalene from 2 farnesyl pyrophosphate moieties. The third module or late pathway involves the ergosterol synthesis itself through consecutive reactions that mainly occur in the endoplasmic reticulum (ER) membrane. Firstly, the squalene synthase erg9 catalyzes the condensation of 2 farnesyl pyrophosphate moieties to form squalene, which is the precursor of all steroids. Secondly, squalene is converted into lanosterol by the consecutive action of the squalene epoxidase erg1 and the lanosterol synthase erg7. The lanosterol 14-alpha-demethylase erg11/cyp1 catalyzes C14-demethylation of lanosterol to produce 4,4'-dimethyl cholesta-8,14,24-triene-3-beta-ol. In the next steps, a complex process involving various demethylation, reduction and desaturation reactions catalyzed by the C-14 reductase erg24 and the C-4 demethylation complex erg25-erg26-erg27 leads to the production of zymosterol. Erg28 likely functions in the C-4 demethylation complex reaction by tethering erg26 and Erg27 to the endoplasmic reticulum or to facilitate interaction between these proteins. Then, the sterol 24-C-methyltransferase erg6 catalyzes the methyl transfer from S-adenosyl-methionine to the C-24 of zymosterol to form fecosterol. The C-8 sterol isomerase erg2 catalyzes the reaction which results in unsaturation at C-7 in the B ring of sterols and thus converts fecosterol to episterol. The sterol-C5-desaturases erg31 and erg32 then catalyze the introduction of a C-5 double bond in the B ring to produce 5-dehydroepisterol. The C-22 sterol desaturase erg5 further converts 5-dehydroepisterol into ergosta-5,7,22,24(28)-tetraen-3beta-ol by forming the C-22(23) double bond in the sterol side chain. Finally, ergosta-5,7,22,24(28)-tetraen-3beta-ol is substrate of the C-24(28) sterol reductase erg4 to produce ergosterol. In the genus Schizosaccharomyces, a second route exists between lanosterol and fecosterol, via the methylation of lanosterol to eburicol by erg6, followed by C14-demethylation by erg11/cyp1 and C4-demethylation by the demethylation complex erg25-erg26-erg27. This chain is Squalene synthase, found in Schizosaccharomyces pombe (strain 972 / ATCC 24843) (Fission yeast).